The primary structure comprises 323 residues: Aquaporin-4 (323 aa).

The Cytoplasmic segment spans residues 1 to 36; it reads MSDGAAARRWGKCGHSCSRESIMVAFKGVWTQAFWK. Residues C13 and C17 are each lipidated (S-palmitoyl cysteine). The helical transmembrane segment at 37-57 threads the bilayer; that stretch reads AVSAEFLATLIFVLLGVGSTI. Residues 58–69 lie on the Extracellular side of the membrane; sequence NWGGSENPLPVD. Residues 70-89 form a helical membrane-spanning segment; that stretch reads MVLISLCFGLSIATMVQCFG. At 90 to 93 the chain is on the cytoplasmic side; that stretch reads HISG. Residues 94 to 101 constitute an intramembrane region (discontinuously helical); sequence GHINPAVT. An NPA 1 motif is present at residues 97–99; that stretch reads NPA. At 102 to 115 the chain is on the cytoplasmic side; it reads VAMVCTRKISIAKS. S111 is subject to Phosphoserine; by PKG. Residues 116–136 traverse the membrane as a helical segment; it reads VFYIIAQCLGAIIGAGILYLV. Residues 137 to 155 lie on the Extracellular side of the membrane; that stretch reads TPPSVVGGLGVTTVHGNLT. N153 carries an N-linked (GlcNAc...) asparagine glycan. The helical transmembrane segment at 156–176 threads the bilayer; the sequence is AGHGLLVELIITFQLVFTIFA. The Cytoplasmic portion of the chain corresponds to 177–184; the sequence is SCDSKRTD. S180 is modified (phosphoserine; by PKC). A helical transmembrane segment spans residues 185-205; it reads VTGSIALAIGFSVAIGHLFAI. A glycan (N-linked (GlcNAc...) asparagine) is linked at N206. At 206–208 the chain is on the extracellular side; sequence NYT. The segment at residues 209–222 is an intramembrane region (discontinuously helical); sequence GASMNPARSFGPAV. Positions 213 to 215 match the NPA 2 motif; sequence NPA. Topologically, residues 223 to 231 are extracellular; sequence IMGNWANHW. A helical transmembrane segment spans residues 232–252; that stretch reads IYWVGPIMGAVLAGALYEYVF. Residues 253-323 are Cytoplasmic-facing; that stretch reads CPDVELKRRL…DSSGEVLSSV (71 aa). Residues S276 and S285 each carry the phosphoserine modification. At T289 the chain carries Phosphothreonine. S321 is modified (phosphoserine).

It belongs to the MIP/aquaporin (TC 1.A.8) family. In terms of assembly, homotetramer. The tetramers can form oligomeric arrays in membranes. The size of the oligomers differs between tissues and is smaller in skeletal muscle than in brain. Interaction between AQP4 oligomeric arrays in close-by cells can contribute to cell-cell adhesion. Part of a complex containing MLC1, TRPV4, HEPACAM and ATP1B1. Phosphorylation by PKC at Ser-180 reduces conductance by 50%. Phosphorylation by PKG at Ser-111 in response to glutamate increases conductance by 40%; this increase is not due to increased presence at the cell membrane. In terms of processing, isoform 2: Palmitoylated on its N-terminal region. Isoform 1: Not palmitoylated. Detected in brain cortex, especially around cortical blood vessels, and subjacent to pia, with lower levels in parenchymal membranes. Detected in ependymal and astroglial cells in brain. Detected in supporting Hensen's cells, inner sulcus cells and Claudius cells in the inner ear. Detected in skeletal muscle. Detected in gastric parietal cells. Detected in principal cells in collecting ducts in kidney medulla (at protein level). Detected in brain, heart and skeletal muscle.

Its subcellular location is the cell membrane. It is found in the basolateral cell membrane. It localises to the endosome membrane. The protein resides in the sarcolemma. The protein localises to the cell projection. The enzyme catalyses H2O(in) = H2O(out). In terms of biological role, forms a water-specific channel. Plays an important role in brain water homeostasis and in glymphatic solute transport. Required for a normal rate of water exchange across the blood brain interface. Required for normal levels of cerebrospinal fluid influx into the brain cortex and parenchyma along paravascular spaces that surround penetrating arteries, and for normal drainage of interstitial fluid along paravenous drainage pathways. Thereby, it is required for normal clearance of solutes from the brain interstitial fluid, including soluble beta-amyloid peptides derived from APP. Plays a redundant role in urinary water homeostasis and urinary concentrating ability. This is Aquaporin-4 (Aqp4) from Mus musculus (Mouse).